We begin with the raw amino-acid sequence, 887 residues long: Inter-alpha-trypsin inhibitor heavy chain H3 (887 aa).

A signal peptide spans 1–21; that stretch reads MVTLWWPCLVLALLSGLETSG. Positions 22-33 are excised as a propeptide; it reads FPRSPLRLLGKR. Positions 29-158 constitute a VIT domain; the sequence is LLGKRSLPEG…KVIFELTYEE (130 aa). Residue N91 is glycosylated (N-linked (GlcNAc...) asparagine). The region spanning 282-442 is the VWFA domain; that stretch reads PKNIAFVIDV…YNFLESLALE (161 aa). The N-linked (GlcNAc...) asparagine glycan is linked to N580. D647 is modified (aspartate 1-(chondroitin 4-sulfate)-ester). The propeptide occupies 648 to 887; the sequence is PHFIIQVPGK…HTDYIVPSLF (240 aa).

It belongs to the ITIH family. As to quaternary structure, I-alpha-I plasma protease inhibitors are assembled from one or two heavy chains (HC) and one light chain, bikunin. Pre-alpha-inhibitor (P-alpha-I) is composed of ITIH3/HC3 and bikunin. Post-translationally, heavy chains are linked to bikunin via chondroitin 4-sulfate esterified to the alpha-carboxyl of the C-terminal aspartate after propeptide cleavage.

The protein localises to the secreted. Its function is as follows. May act as a carrier of hyaluronan in serum or as a binding protein between hyaluronan and other matrix protein, including those on cell surfaces in tissues to regulate the localization, synthesis and degradation of hyaluronan which are essential to cells undergoing biological processes. The polypeptide is Inter-alpha-trypsin inhibitor heavy chain H3 (Itih3) (Rattus norvegicus (Rat)).